Reading from the N-terminus, the 259-residue chain is Virion protein US10 homolog (259 aa).

The segment at 162–174 (CAHWCCLGHAFGC) is a zinc-finger region.

Belongs to the herpesviridae US10 family. Phosphorylated.

It is found in the virion tegument. It localises to the host nucleus matrix. The polypeptide is Virion protein US10 homolog (Equine herpesvirus 4 (strain 1942) (EHV-4)).